The primary structure comprises 164 residues: Glutamate uptake regulatory protein (164 aa).

The region spanning 5–66 is the HTH asnC-type domain; it reads LDDFDIKILD…LLDPQKIGLG (62 aa). A DNA-binding region (H-T-H motif) is located at residues 24 to 43; sequence MAELSEKTGLSANACWRRIR.

Functionally, represses the secondary, H(+)-coupled glutamate uptake system (Gluemp) genes. This is Glutamate uptake regulatory protein (grp) from Zymomonas mobilis subsp. mobilis (strain ATCC 10988 / DSM 424 / LMG 404 / NCIMB 8938 / NRRL B-806 / ZM1).